Here is a 1063-residue protein sequence, read N- to C-terminus: TBC1 domain family member 31 (1063 aa).

7 WD repeats span residues 33 to 74 (HNTS…LCGN), 75 to 116 (RFNL…TVTK), 117 to 157 (ELVS…LDTF), 158 to 200 (QRKR…CDTL), 201 to 248 (VCKY…AKQL), 249 to 296 (FRII…IQTC), and 297 to 334 (KLLF…NIYS). The Rab-GAP TBC domain maps to 424–599 (EFPTKYRMFI…KLFDNVFSNH (176 aa)). Residues 699 to 951 (ELDYLRERQA…EAKKWEEAEE (253 aa)) are a coiled coil. A mediates direct interaction with PJA2 region spans residues 1050–1053 (QAQN).

Interacts with PJA2; the interaction is direct and recruits PJA2 to centrosomes. Interacts with OFD1; regulates its activity in cilium assembly. Interacts with PRKACA.

The protein resides in the cytoplasm. The protein localises to the cytoskeleton. It localises to the microtubule organizing center. Its subcellular location is the centrosome. It is found in the centriolar satellite. The protein resides in the cilium basal body. Molecular adapter which is involved in cilium biogenesis. Part of a functional complex including OFD1 a centriolar protein involved in cilium assembly. Could regulate the cAMP-dependent phosphorylation of OFD1, and its subsequent ubiquitination by PJA2 which ultimately leads to its proteasomal degradation. The chain is TBC1 domain family member 31 from Bos taurus (Bovine).